Here is a 226-residue protein sequence, read N- to C-terminus: Amelogenin (226 aa).

Residues 1-16 (MGTWILFACLLGTAFA) form the signal peptide. The residue at position 32 (serine 32) is a Phosphoserine. The segment at 86 to 196 (QQHPPSHTTL…LPPQQALPPM (111 aa)) is disordered. 2 stretches are compositionally biased toward low complexity: residues 88–120 (HPPS…MPVP) and 137–182 (PTSQ…SPLH). Residues 183-192 (PIQPLPPQQA) are compositionally biased toward pro residues.

Belongs to the amelogenin family.

The protein localises to the secreted. The protein resides in the extracellular space. It localises to the extracellular matrix. In terms of biological role, plays a role in the biomineralization of teeth. Seems to regulate the formation of crystallites during the secretory stage of tooth enamel development. Thought to play a major role in the structural organization and mineralization of developing enamel. This Cavia porcellus (Guinea pig) protein is Amelogenin (AMEL).